The following is a 262-amino-acid chain: Eukaryotic translation initiation factor 3 subunit G (262 aa).

The RRM domain maps to 182-260; it reads NTCRVTNLPQ…MVLKVEWTRP (79 aa).

Belongs to the eIF-3 subunit G family. In terms of assembly, component of the eukaryotic translation initiation factor 3 (eIF-3) complex.

It localises to the cytoplasm. Functionally, RNA-binding component of the eukaryotic translation initiation factor 3 (eIF-3) complex, which is involved in protein synthesis of a specialized repertoire of mRNAs and, together with other initiation factors, stimulates binding of mRNA and methionyl-tRNAi to the 40S ribosome. The eIF-3 complex specifically targets and initiates translation of a subset of mRNAs involved in cell proliferation. This subunit can bind 18S rRNA. Binds to GC-rich 5'UTRs in cholinergic motor neurons, thereby may play a role in translational regulation of mRNAs involved in neuropeptide signaling and stress response, including hlh-30 isoform d and ncs-2. The polypeptide is Eukaryotic translation initiation factor 3 subunit G (Caenorhabditis elegans).